The primary structure comprises 659 residues: mRNA export factor ICP27 homolog (659 aa).

Cys130, His266, Cys268, and Cys273 together coordinate Zn(2+). The CHC2-type zinc-finger motif lies at 130 to 273 (CMMSNGERPP…CEHACNDNAC (144 aa)). Residues 317 to 659 (GSFDDSRSAT…GEDGESDMTL (343 aa)) are disordered. Residues 324–336 (SATSGDGSSCSSA) show a composition bias toward low complexity. A compositionally biased stretch (polar residues) spans 354–365 (SDQTDTSNNGTV). Residues 387 to 397 (SPLDRPNDYHY) show a composition bias toward basic and acidic residues. Low complexity predominate over residues 413 to 427 (GSGSSSTEAVSTASA). Positions 483–499 (SPERRSSEERSSSDQRR) are enriched in basic and acidic residues. Positions 503 to 513 (LSRSASATSGG) are enriched in polar residues. Positions 553 to 575 (SRSNTPPSSPSKPDSAPAASASP) are enriched in low complexity. A compositionally biased stretch (basic and acidic residues) spans 598-610 (ESVRVSERFETGD). Acidic residues-rich tracts occupy residues 617–628 (ETEDESDDEDDQ) and 646–659 (SETD…DMTL).

Belongs to the HHV-1 ICP27 protein family.

The protein resides in the virion tegument. The protein localises to the virion. It is found in the host nucleus. Its subcellular location is the host cytoplasm. Functionally, immediate early (EI) protein that plays many roles during productive infection including regulation of viral gene expression and nuclear export of intronless viral RNAs. This Elephantid herpesvirus 1 (isolate Asian elephant/Berlin/Kiba/1998) (EIHV-1) protein is mRNA export factor ICP27 homolog.